Reading from the N-terminus, the 157-residue chain is SsrA-binding protein (157 aa).

A disordered region spans residues 133–157 (LHDKRESEKKRDWGREKGRLLRARG). A compositionally biased stretch (basic and acidic residues) spans 135–151 (DKRESEKKRDWGREKGR).

It belongs to the SmpB family.

The protein localises to the cytoplasm. Required for rescue of stalled ribosomes mediated by trans-translation. Binds to transfer-messenger RNA (tmRNA), required for stable association of tmRNA with ribosomes. tmRNA and SmpB together mimic tRNA shape, replacing the anticodon stem-loop with SmpB. tmRNA is encoded by the ssrA gene; the 2 termini fold to resemble tRNA(Ala) and it encodes a 'tag peptide', a short internal open reading frame. During trans-translation Ala-aminoacylated tmRNA acts like a tRNA, entering the A-site of stalled ribosomes, displacing the stalled mRNA. The ribosome then switches to translate the ORF on the tmRNA; the nascent peptide is terminated with the 'tag peptide' encoded by the tmRNA and targeted for degradation. The ribosome is freed to recommence translation, which seems to be the essential function of trans-translation. This is SsrA-binding protein from Bradyrhizobium sp. (strain ORS 278).